The following is a 406-amino-acid chain: Putative permease Rv2963 (406 aa).

9 consecutive transmembrane segments (helical) span residues 30 to 50 (WEILWALILGFALSAVVQAVV), 67 to 87 (LVIATGLGAASSSCSYAAVAL), 111 to 131 (LVVELGIILALLMGWQFTAAE), 132 to 152 (FVGGPIMILVLAVLFRLFVGA), 208 to 228 (LAILRDLILGLLIAGAIAAWV), 246 to 266 (AVWGPIIGPIVAIVSFVCSIG), 278 to 298 (GISFGGVIAFIFADLLILPIL), 312 to 332 (VLLGTFYASMVVAGYLIELLF), and 361 to 381 (VIFLVIAAALVVRFITSGGLP).

It belongs to the UPF0718 family.

The protein localises to the cell membrane. This Mycobacterium tuberculosis (strain ATCC 25618 / H37Rv) protein is Putative permease Rv2963.